An 83-amino-acid polypeptide reads, in one-letter code: Cytochrome b559 subunit alpha (83 aa).

A helical transmembrane segment spans residues valine 21 to tryptophan 35. Histidine 23 lines the heme pocket.

The protein belongs to the PsbE/PsbF family. In terms of assembly, heterodimer of an alpha subunit and a beta subunit. PSII is composed of 1 copy each of membrane proteins PsbA, PsbB, PsbC, PsbD, PsbE, PsbF, PsbH, PsbI, PsbJ, PsbK, PsbL, PsbM, PsbT, PsbX, PsbY, PsbZ, Psb30/Ycf12, at least 3 peripheral proteins of the oxygen-evolving complex and a large number of cofactors. It forms dimeric complexes. The cofactor is heme b.

The protein resides in the plastid. It localises to the chloroplast thylakoid membrane. Functionally, this b-type cytochrome is tightly associated with the reaction center of photosystem II (PSII). PSII is a light-driven water:plastoquinone oxidoreductase that uses light energy to abstract electrons from H(2)O, generating O(2) and a proton gradient subsequently used for ATP formation. It consists of a core antenna complex that captures photons, and an electron transfer chain that converts photonic excitation into a charge separation. This Anthoceros angustus (Hornwort) protein is Cytochrome b559 subunit alpha.